Reading from the N-terminus, the 371-residue chain is Dead end protein homolog 1 (371 aa).

RRM domains lie at Pro85–Gly163 and Pro165–Ser245.

The protein localises to the nucleus. Its subcellular location is the cytoplasm. Functionally, RNA-binding factor that positively regulates gene expression by prohibiting miRNA-mediated gene suppression. Relieves miRNA repression in germline cells. Prohibits the function of several miRNAs by blocking the accessibility of target mRNAs. Sequence-specific RNA-binding factor that binds to U-rich regions (URRs) in the 3'untranslated region (3'-UTR) of several mRNAs. Does not bind to miRNAs. May play a role during early embryonic survival. The polypeptide is Dead end protein homolog 1 (dnd1) (Xenopus laevis (African clawed frog)).